Consider the following 242-residue polypeptide: DnaJ homolog subfamily B member 6 (242 aa).

The region spanning 3 to 69 (EYYDVLGVQR…KKRDIYDKYG (67 aa)) is the J domain.

In terms of assembly, homooligomer.

The protein localises to the cytoplasm. It is found in the perinuclear region. Its subcellular location is the nucleus. Its function is as follows. Has a stimulatory effect on the ATPase activity of HSP70 in a dose-dependent and time-dependent manner and hence acts as a co-chaperone of HSP70. Plays an indispensable role in the organization of KRT8/KRT18 filaments. Acts as an endogenous molecular chaperone for neuronal proteins including huntingtin. Suppresses aggregation and toxicity of polyglutamine-containing, aggregation-prone proteins. Also reduces cellular toxicity and caspase-3 activity. The chain is DnaJ homolog subfamily B member 6 from Xenopus tropicalis (Western clawed frog).